We begin with the raw amino-acid sequence, 222 residues long: MTEGLLALGIEQLGLDLSPQNVADLELFLQEMTRWNQVHNLTAIDNEEGSIRLHLIDSIAVLPVMRRFLPQQNPKIADLGSGGGLPAIPIAIVEPNWRLTLIEAIRKKTAFLQHVRGKLKLKNIEVISDRVENVALQQSGQFDAVISRAFTNLARFLDLSLPLLKPDGLVFAMKAKRADEEMQNVSMQDWHLLADEPLHIPNLAVERRLLVLTPVRKLPLPI.

Residues Gly-80, Leu-85, 131 to 132 (VE), and Arg-148 each bind S-adenosyl-L-methionine.

The protein belongs to the methyltransferase superfamily. RNA methyltransferase RsmG family.

The protein localises to the cytoplasm. It catalyses the reaction guanosine(527) in 16S rRNA + S-adenosyl-L-methionine = N(7)-methylguanosine(527) in 16S rRNA + S-adenosyl-L-homocysteine. In terms of biological role, specifically methylates the N7 position of guanine in position 527 of 16S rRNA. The sequence is that of Ribosomal RNA small subunit methyltransferase G from Polynucleobacter asymbioticus (strain DSM 18221 / CIP 109841 / QLW-P1DMWA-1) (Polynucleobacter necessarius subsp. asymbioticus).